A 251-amino-acid polypeptide reads, in one-letter code: tRNA pseudouridine synthase A (251 aa).

Asp-52 functions as the Nucleophile in the catalytic mechanism. Substrate is bound at residue Tyr-113.

Belongs to the tRNA pseudouridine synthase TruA family. As to quaternary structure, homodimer.

It carries out the reaction uridine(38/39/40) in tRNA = pseudouridine(38/39/40) in tRNA. Functionally, formation of pseudouridine at positions 38, 39 and 40 in the anticodon stem and loop of transfer RNAs. The chain is tRNA pseudouridine synthase A from Brucella abortus (strain 2308).